An 867-amino-acid chain; its full sequence is Protein translocase subunit SecA 1 (867 aa).

Residues Q86, G104–T108, and D493 contribute to the ATP site.

It belongs to the SecA family. Monomer and homodimer. Part of the essential Sec protein translocation apparatus which comprises SecA, SecYEG and auxiliary proteins SecDF. Other proteins may also be involved.

It is found in the cell membrane. The protein localises to the cytoplasm. It catalyses the reaction ATP + H2O + cellular proteinSide 1 = ADP + phosphate + cellular proteinSide 2.. In terms of biological role, part of the Sec protein translocase complex. Interacts with the SecYEG preprotein conducting channel. Has a central role in coupling the hydrolysis of ATP to the transfer of proteins into and across the cell membrane, serving as an ATP-driven molecular motor driving the stepwise translocation of polypeptide chains across the membrane. The chain is Protein translocase subunit SecA 1 from Corynebacterium jeikeium (strain K411).